The following is a 117-amino-acid chain: MARRTRNRSEIIARRFVSRQQPTRTQPFVERWRWIIQGQVQGVGFRASCSRRALDMGLKGWVRNLQDGSVEVQAEGPPIALAELRAWCEKGPLGAQVKRVKPCQMPVRGDDWFEVRY.

One can recognise an Acylphosphatase-like domain in the interval 31–117 (RWRWIIQGQV…RGDDWFEVRY (87 aa)). Catalysis depends on residues arginine 46 and asparagine 64.

This sequence belongs to the acylphosphatase family.

The enzyme catalyses an acyl phosphate + H2O = a carboxylate + phosphate + H(+). In Synechococcus sp. (strain CC9902), this protein is Acylphosphatase (acyP).